The primary structure comprises 506 residues: Lysine--tRNA ligase (506 aa).

Mg(2+) contacts are provided by Glu-415 and Glu-422.

The protein belongs to the class-II aminoacyl-tRNA synthetase family. Homodimer. Requires Mg(2+) as cofactor.

The protein localises to the cytoplasm. It carries out the reaction tRNA(Lys) + L-lysine + ATP = L-lysyl-tRNA(Lys) + AMP + diphosphate. The polypeptide is Lysine--tRNA ligase (lysS) (Buchnera aphidicola subsp. Acyrthosiphon pisum (strain APS) (Acyrthosiphon pisum symbiotic bacterium)).